Reading from the N-terminus, the 242-residue chain is ATP synthase subunit a (242 aa).

The next 6 membrane-spanning stretches (helical) occupy residues 29–49, 84–104, 114–134, 140–160, 181–201, and 203–223; these read SSIY…LAFY, FIPL…LGMT, IIVT…VGFV, FLTL…MIVI, MAGH…MIYL, and FLPI…AILQ.

It belongs to the ATPase A chain family. F-type ATPases have 2 components, CF(1) - the catalytic core - and CF(0) - the membrane proton channel. CF(1) has five subunits: alpha(3), beta(3), gamma(1), delta(1), epsilon(1). CF(0) has three main subunits: a(1), b(2) and c(9-12). The alpha and beta chains form an alternating ring which encloses part of the gamma chain. CF(1) is attached to CF(0) by a central stalk formed by the gamma and epsilon chains, while a peripheral stalk is formed by the delta and b chains.

The protein localises to the cell inner membrane. Functionally, key component of the proton channel; it plays a direct role in the translocation of protons across the membrane. The sequence is that of ATP synthase subunit a from Rickettsia rickettsii (strain Sheila Smith).